Consider the following 361-residue polypeptide: Queuine tRNA-ribosyltransferase (361 aa).

Residue Asp92 is the Proton acceptor of the active site. Substrate-binding positions include 92-96 (DSGGF), Asp146, Gln189, and Gly216. Residues 247-253 (GVGKPAD) form an RNA binding region. The active-site Nucleophile is the Asp266. The RNA binding; important for wobble base 34 recognition stretch occupies residues 271–275 (TRAGR). Zn(2+) is bound by residues Cys304, Cys306, Cys309, and His335.

The protein belongs to the queuine tRNA-ribosyltransferase family. Homodimer. Within each dimer, one monomer is responsible for RNA recognition and catalysis, while the other monomer binds to the replacement base PreQ1. Requires Zn(2+) as cofactor.

It catalyses the reaction 7-aminomethyl-7-carbaguanine + guanosine(34) in tRNA = 7-aminomethyl-7-carbaguanosine(34) in tRNA + guanine. Its pathway is tRNA modification; tRNA-queuosine biosynthesis. Functionally, catalyzes the base-exchange of a guanine (G) residue with the queuine precursor 7-aminomethyl-7-deazaguanine (PreQ1) at position 34 (anticodon wobble position) in tRNAs with GU(N) anticodons (tRNA-Asp, -Asn, -His and -Tyr). Catalysis occurs through a double-displacement mechanism. The nucleophile active site attacks the C1' of nucleotide 34 to detach the guanine base from the RNA, forming a covalent enzyme-RNA intermediate. The proton acceptor active site deprotonates the incoming PreQ1, allowing a nucleophilic attack on the C1' of the ribose to form the product. After dissociation, two additional enzymatic reactions on the tRNA convert PreQ1 to queuine (Q), resulting in the hypermodified nucleoside queuosine (7-(((4,5-cis-dihydroxy-2-cyclopenten-1-yl)amino)methyl)-7-deazaguanosine). The sequence is that of Queuine tRNA-ribosyltransferase from Rickettsia massiliae (strain Mtu5).